The chain runs to 594 residues: Adenine deaminase 1 (594 aa).

This sequence belongs to the metallo-dependent hydrolases superfamily. Adenine deaminase family. It depends on Mn(2+) as a cofactor.

It catalyses the reaction adenine + H2O + H(+) = hypoxanthine + NH4(+). This Desulfotalea psychrophila (strain LSv54 / DSM 12343) protein is Adenine deaminase 1.